Reading from the N-terminus, the 275-residue chain is Trans-aconitate 2-methyltransferase (275 aa).

This sequence belongs to the methyltransferase superfamily. Tam family.

It is found in the cytoplasm. It catalyses the reaction trans-aconitate + S-adenosyl-L-methionine = (E)-3-(methoxycarbonyl)pent-2-enedioate + S-adenosyl-L-homocysteine. In terms of biological role, catalyzes the S-adenosylmethionine monomethyl esterification of trans-aconitate. The chain is Trans-aconitate 2-methyltransferase from Pseudomonas aeruginosa (strain UCBPP-PA14).